A 2341-amino-acid chain; its full sequence is MGSQTLQILRQGVWAALSGGWYYDPHQATFVNALHLYLWLFLLGLPFTLYMALPSTMIIVAVYCPVIAAVFIVLKMVNYRLHRALDAGEVVDRTANEFTDQRTKAEQGNCSTRRKDSNGPSDPGGGIEMSEFIREATPPVGCSSRNSYAGLDPSNQIGSGSSRLGTAATIKGDTDTAKTSDDISLSLGQSSSLCKEGSEEQDLAADRKLFRLVSNDSFISIQPSLSSCGQDLPRDFSDKVNLPSHNHHHHVDQSLSSACDTEVASLVPLHSHSYRKDHRPRGVPRTSSSAVAFPDTSLNDFPLYQQRRGLDPVSELESSKPLSGSKESLVENSGLSGEFQLAGDLKINTSQPPTKSGKSKPLKAEKSMDSLRSLSTRSSGSTESYCSGTDRDTNSTVSSYKSEQTSSTHIESILSEHEESPKAGTKSGRKKECCAGPEEKNSCASDKRTSSEKIAMEASTNSGVHEAKDPTPSDEMHNQRGLSTSASEEANKNPHANEFTSQGDRPPGNTAENKEEKSDKSAVSVDSKVRKDVGGKQKEGDVRPKSSSVIHRTASAHKSGRRRTGKKRASSFDSSRHRDYVCFRGVSGTKPHSAIFCHDEDSSDQSDLSRASSVQSAHQFSSDSSSSTTSHSCQSPEGRYSALKTKHTHKERGTDSEHTHKAHLVPEGTSKKRATRRTSSTNSAKTRARVLSLDSGTVACLNDSNRLMAPESIKPLTTSKSDLEAKEGEVLDELSLLGRASQLETVTRSRNSLPNQVAFPEGEEQDAVSGAAQASEEAVSFRRERSTFRRQAVRRRHNAGSNPTPPTLLIGSPLSLQDGQQGQQSTAQVKVQSRPPSQAAVLSASASLLVRNGSVHLEASHDNASAVGGSSLHDELGKFSSTLYETGGCDMSLVNFEPAARRASNICDTDSHVSSSTSVRFYPHDVLSLPQIRLNRLLTIDTDLLEQQDIDLSPDLAATYGPTEEAAQKVKHYYRFWILPQLWIGINFDRLTLLALFDRNREILENVLAVILAILVAFLGSILLIQGFFRDIWVFQFCLVIASCQYSLLKSVQPDSSSPRHGHNRIIAYSRPVYFCICCGLIWLLDYGSRNLTATKFKLYGITFTNPLVFISARDLVIVFTLCFPIVFFIGLLPQVNTFVMYLCEQLDIHIFGGNATTSLLAALYSFICSIVAVALLYGLCYGALKDSWDGQHIPVLFSIFCGLLVAVSYHLSRQSSDPSVLFSLVQSKIFPKTEEKNPEDPLSEVKDPLPEKLRNSVSERLQSDLVVCIVIGVLYFAIHVSTVFTVLQPALKYVLYTLVGFVGFVTHYVLPQVRKQLPWHCFSHPLLKTLEYNQYEVRNAATMMWFEKLHVWLLFVEKNIIYPLIVLNELSSSAETIASPKKLNTELGALMITVAGLKLLRSSFSSPTYQYVTVIFTVLFFKFDYEAFSETMLLDLFFMSILFNKLWELLYKLQFVYTYIAPWQITWGSAFHAFAQPFAVPHSAMLFIQAAVSAFFSTPLNPFLGSAIFITSYVRPVKFWERDYNTKRVDHSNTRLASQLDRNPGSDDNNLNSIFYEHLTRSLQHSLCGDLLLGRWGNYSTGDCFILASDYLNALVHLIEIGNGLVTFQLRGLEFRGTYCQQREVEAITEGVEEDEGFCCCEPGHIPHMLSFNAAFSQRWLAWEVIVTKYILEGYSITDNSAASMLQVFDLRKVLTTYYVKGIIYYVTTSSKLEEWLANETMQEGLRLCADRNYVDVDPTFNPNIDEDYDHRLAGISRESFCVIYLNWIEYCSSRRAKPVDVDKDSSLVTLCYGLCVLGRRALGTASHHMSSNLESFLYGLHALFKGDFRISSIRDEWIFADMELLRKVVVPGIRMSIKLHQDHFTSPDEYDDPTVLYEAIVSHEKNLVIAHEGDPAWRSAVLANSPSLLALRHVMDDGTNEYKIIMLNRRYLSFRVIKVNKECVRGLWAGQQQELVFLRNRNPERGSIQNAKQALRNMINSSCDQPIGYPIFVSPLTTSYSDSHEQLKDILGGPISLGNIRNFIVSTWHRLRKGCGAGCNSGGNIEDSDTGGGTSCTGNNATTANNPHSNVTQGSIGNPGQGSGTGLHPPVTSYPPTLGTSHSSHSVQSGLVRQSPARASVASQSSYCYSSRHSSLRMSTTGFVPCRRSSTSQISLRNLPSSIQSRLSMVNQMEPSGQSGLACVQHGLPSSSSSSQSIPACKHHTLVGFLATEGGQSSATDAQPGNTLSPANNSHSRKAEVIYRVQIVDPSQILEGINLSKRKELQWPDEGIRLKAGRNSWKDWSPQEGMEGHVIHRWVPCSRDPGTRSHIDKAVLLVQIDDKYVTVIETGVLELGAEV.

2 consecutive transmembrane segments (helical) span residues 28 to 50 (ATFV…FTLY) and 57 to 74 (MIIV…FIVL). The disordered stretch occupies residues 98 to 163 (FTDQRTKAEQ…SNQIGSGSSR (66 aa)). An N-linked (GlcNAc...) asparagine glycan is attached at Asn-109. Residues 143-163 (SSRNSYAGLDPSNQIGSGSSR) show a composition bias toward polar residues. Asn-215 is a glycosylation site (N-linked (GlcNAc...) asparagine). Disordered regions lie at residues 270-294 (HSHS…VAFP), 311-331 (DPVS…SLVE), and 344-689 (DLKI…TRAR). Residues 272-282 (HSYRKDHRPRG) are compositionally biased toward basic residues. 2 stretches are compositionally biased toward polar residues: residues 320 to 331 (KPLSGSKESLVE) and 347 to 356 (INTSQPPTKS). Asn-348 carries an N-linked (GlcNAc...) asparagine glycan. Residues 370 to 388 (SLRSLSTRSSGSTESYCSG) are compositionally biased toward low complexity. A glycan (N-linked (GlcNAc...) asparagine) is linked at Asn-394. Positions 394-404 (NSTVSSYKSEQ) are enriched in polar residues. Composition is skewed to basic and acidic residues over residues 430–455 (KKEC…EKIA), 465–478 (HEAK…EMHN), and 527–544 (SKVR…DVRP). Residues 554 to 569 (ASAHKSGRRRTGKKRA) are compositionally biased toward basic residues. Over residues 605-635 (QSDLSRASSVQSAHQFSSDSSSSTTSHSCQS) the composition is skewed to low complexity. Residue Asn-702 is glycosylated (N-linked (GlcNAc...) asparagine). Positions 756-834 (QVAFPEGEEQ…STAQVKVQSR (79 aa)) are disordered. Positions 814-832 (LSLQDGQQGQQSTAQVKVQ) are enriched in low complexity. 2 N-linked (GlcNAc...) asparagine glycosylation sites follow: Asn-852 and Asn-863. Transmembrane regions (helical) follow at residues 1003-1025 (ILEN…ILLI), 1032-1049 (IWVF…YSLL), and 1067-1089 (IAYS…DYGS). A glycan (N-linked (GlcNAc...) asparagine) is linked at Asn-1091. Residues 1110 to 1132 (FISARDLVIVFTLCFPIVFFIGL) form a helical membrane-spanning segment. The N-linked (GlcNAc...) asparagine glycan is linked to Asn-1155. Helical transmembrane passes span 1160–1182 (LLAA…GLCY), 1194–1213 (IPVL…YHLS), 1266–1288 (LVVC…FTVL), and 1295–1312 (VLYT…YVLP). N-linked (GlcNAc...) asparagine glycans are attached at residues Asn-1579, Asn-1720, Asn-1982, Asn-2062, and Asn-2072. 2 disordered regions span residues 2062 to 2120 (NATT…SPAR) and 2217 to 2237 (GQSS…NNSH). 3 stretches are compositionally biased toward polar residues: residues 2069–2078 (PHSNVTQGSI), 2096–2114 (YPPT…SGLV), and 2217–2236 (GQSS…ANNS). N-linked (GlcNAc...) asparagine glycosylation is found at Asn-2234 and Asn-2260.

It belongs to the pecanex family.

It is found in the membrane. This Homo sapiens (Human) protein is Pecanex-like protein 1.